The chain runs to 348 residues: ATPase GET3 (348 aa).

26 to 33 provides a ligand contact to ATP; the sequence is KGGVGKTT. Residue Asp-57 is part of the active site. ATP is bound by residues Glu-241 and Asn-268. Positions 280 and 283 each coordinate Zn(2+). 310-312 is a binding site for ATP; sequence PLL.

Belongs to the arsA ATPase family. In terms of assembly, homodimer. Component of the Golgi to ER traffic (GET) complex, which is composed of GET1, GET2 and GET3. Within the complex, GET1 and GET2 form a heterotetramer which is stabilized by phosphatidylinositol binding and which binds to the GET3 homodimer. Interacts with the chloride channel protein GEF1.

It is found in the cytoplasm. The protein localises to the endoplasmic reticulum. It localises to the golgi apparatus. Its function is as follows. ATPase required for the post-translational delivery of tail-anchored (TA) proteins to the endoplasmic reticulum. Recognizes and selectively binds the transmembrane domain of TA proteins in the cytosol. This complex then targets to the endoplasmic reticulum by membrane-bound receptors GET1 and GET2, where the tail-anchored protein is released for insertion. This process is regulated by ATP binding and hydrolysis. ATP binding drives the homodimer towards the closed dimer state, facilitating recognition of newly synthesized TA membrane proteins. ATP hydrolysis is required for insertion. Subsequently, the homodimer reverts towards the open dimer state, lowering its affinity for the GET1-GET2 receptor, and returning it to the cytosol to initiate a new round of targeting. Cooperates with the HDEL receptor ERD2 to mediate the ATP-dependent retrieval of resident ER proteins that contain a C-terminal H-D-E-L retention signal from the Golgi to the ER. Involved in low-level resistance to the oxyanions arsenite and arsenate, and in heat tolerance. The chain is ATPase GET3 from Debaryomyces hansenii (strain ATCC 36239 / CBS 767 / BCRC 21394 / JCM 1990 / NBRC 0083 / IGC 2968) (Yeast).